We begin with the raw amino-acid sequence, 206 residues long: Uridine kinase (206 aa).

11–18 (GGTGSGKS) contacts ATP.

It belongs to the uridine kinase family.

The protein resides in the cytoplasm. It catalyses the reaction uridine + ATP = UMP + ADP + H(+). It carries out the reaction cytidine + ATP = CMP + ADP + H(+). It functions in the pathway pyrimidine metabolism; CTP biosynthesis via salvage pathway; CTP from cytidine: step 1/3. It participates in pyrimidine metabolism; UMP biosynthesis via salvage pathway; UMP from uridine: step 1/1. This Clostridium botulinum (strain Kyoto / Type A2) protein is Uridine kinase.